The following is a 418-amino-acid chain: AP-3 complex subunit mu-2 (418 aa).

Residues 176-417 form the MHD domain; sequence NNEAYFDVVE…MTKAGKFQVR (242 aa).

The protein belongs to the adaptor complexes medium subunit family. Adaptor protein complex 3 (AP-3) is a heterotetramer composed of two large adaptins (delta-type subunit AP3D1 and beta-type subunit AP3B1 or AP3B2), a medium adaptin (mu-type subunit AP3M1 or AP3M2) and a small adaptin (sigma-type subunit APS1 or AP3S2). AP-3 associates with the BLOC-1 complex.

The protein localises to the golgi apparatus. Its subcellular location is the cytoplasmic vesicle membrane. Functionally, component of the adaptor complexes which link clathrin to receptors in coated vesicles. Clathrin-associated protein complexes are believed to interact with the cytoplasmic tails of membrane proteins, leading to their selection and concentration. Ap47 is a subunit of the plasma membrane adaptor. In concert with the BLOC-1 complex, AP-3 is required to target cargos into vesicles assembled at cell bodies for delivery into neurites and nerve terminals. This chain is AP-3 complex subunit mu-2 (Ap3m2), found in Mus musculus (Mouse).